We begin with the raw amino-acid sequence, 151 residues long: Large ribosomal subunit protein bL9 (151 aa).

Belongs to the bacterial ribosomal protein bL9 family.

Its function is as follows. Binds to the 23S rRNA. This is Large ribosomal subunit protein bL9 from Bordetella pertussis (strain Tohama I / ATCC BAA-589 / NCTC 13251).